Here is a 446-residue protein sequence, read N- to C-terminus: Nuclear envelope integral membrane protein 1 (446 aa).

Positions Met1 to Gly37 are cleaved as a signal peptide. 3 N-linked (GlcNAc...) asparagine glycosylation sites follow: Asn62, Asn118, and Asn129. Transmembrane regions (helical) follow at residues Ile154–Ser174, Tyr181–Tyr201, Pro209–Phe229, His239–Tyr259, and Ser269–Ile289. Acidic residues predominate over residues Leu410–Ile431. Positions Leu410–Lys446 are disordered. An N-linked (GlcNAc...) asparagine glycan is attached at Asn441.

This sequence belongs to the NEMP family.

The protein resides in the nucleus inner membrane. Functionally, contributes to nuclear envelope stiffness in germ cells. Involved in male and female fertility. Essential for normal erythropoiesis. Required for efficient nuclear envelope opening and enucleation during the late stages of erythroblast maturation. The protein is Nuclear envelope integral membrane protein 1 of Danio rerio (Zebrafish).